The chain runs to 531 residues: MERLAGRIILLSGVSRTFVGFLAGLLAVLAQPPFGIFAAAFVSFPVLVWLIDGVAPDPGDGLLRRLMPPAAIGWSFGFGYFLGGLWWLGNALLVEADAFAWALPLTVVGLPAVLGLFYALAVVIARSLWSDGWGRIAALALGFGIAEWLRGFLFTGFPWNAIGYAAMPMPLMMQSASVVNLSTINMLAVFVFAAPALIWTGKGARAGLAIAAALFTAHVAFGFYRLAQPAPAPLQPEMTVRVVQPVIDQAKKLDDRERASIFEDHLSLTAAPVQDGAKRPDIVVWPETSIPFILTDNPDALARIADVLQDGQVLVAGAVRVEDAGAGLPPRYYNSVYVIDDRGQIVGAADKVHLVPFGEYLPFEDLLTSWGLSSVAASMPGGFSAASTRPVLTLPGGRRIYPMICYEAIFADEVDGNARLADALLNITNDAWFGDTPGPRQHFHQAQLRAVEAGTPMIRAANTGISAVVDARGVLVVVLGYNYRGVIDTILPGKLPTLTNIATRSQIFWLTTGILFLVAAISRLGFNIRKN.

Helical transmembrane passes span isoleucine 8–valine 28, phenylalanine 34–valine 54, proline 69–glycine 89, leucine 105–alanine 125, isoleucine 136–glycine 156, valine 178–isoleucine 198, and alanine 206–leucine 226. The region spanning valine 243–glycine 493 is the CN hydrolase domain. Residue glutamate 287 is the Proton acceptor of the active site. Residue lysine 351 is part of the active site. Residue cysteine 405 is the Nucleophile of the active site. A helical membrane pass occupies residues isoleucine 507–asparagine 527.

This sequence belongs to the CN hydrolase family. Apolipoprotein N-acyltransferase subfamily.

It is found in the cell inner membrane. The enzyme catalyses N-terminal S-1,2-diacyl-sn-glyceryl-L-cysteinyl-[lipoprotein] + a glycerophospholipid = N-acyl-S-1,2-diacyl-sn-glyceryl-L-cysteinyl-[lipoprotein] + a 2-acyl-sn-glycero-3-phospholipid + H(+). It functions in the pathway protein modification; lipoprotein biosynthesis (N-acyl transfer). Its function is as follows. Catalyzes the phospholipid dependent N-acylation of the N-terminal cysteine of apolipoprotein, the last step in lipoprotein maturation. The protein is Apolipoprotein N-acyltransferase of Rhizobium meliloti (strain 1021) (Ensifer meliloti).